A 419-amino-acid chain; its full sequence is D-amino acid dehydrogenase (419 aa).

3–17 provides a ligand contact to FAD; sequence VIVLGSGVIGVASAY.

Belongs to the DadA oxidoreductase family. FAD is required as a cofactor.

It catalyses the reaction a D-alpha-amino acid + A + H2O = a 2-oxocarboxylate + AH2 + NH4(+). It participates in amino-acid degradation; D-alanine degradation; NH(3) and pyruvate from D-alanine: step 1/1. Oxidative deamination of D-amino acids. This is D-amino acid dehydrogenase from Acinetobacter baylyi (strain ATCC 33305 / BD413 / ADP1).